The primary structure comprises 100 residues: Mitochondrial zinc maintenance protein 1, mitochondrial (100 aa).

The protein belongs to the complex I LYR family. MZM1 subfamily. Interacts with RIP1.

The protein localises to the mitochondrion matrix. Assembly factor required for Rieske Fe-S protein RIP1 incorporation into the cytochrome b-c1 (CIII) complex. Functions as a chaperone, binding to this subunit within the mitochondrial matrix and stabilizing it prior to its translocation and insertion into the late CIII dimeric intermediate within the mitochondrial inner membrane. Modulates the mitochondrial matrix zinc pool. The protein is Mitochondrial zinc maintenance protein 1, mitochondrial (new18) of Schizosaccharomyces pombe (strain 972 / ATCC 24843) (Fission yeast).